The primary structure comprises 1043 residues: Non-canonical nonribosomal peptide synthetase cpsA (1043 aa).

Residues 41–386 (RRAQENPSAP…IGGDGVSPGY (346 aa)) form an adenylation (A) domain region. Residues 549 to 626 (QDASTTISRL…QMARYVDEGG (78 aa)) form the Carrier domain. O-(pantetheine 4'-phosphoryl)serine is present on serine 586. The short-chain dehydrogenase/reductase (R) domain stretch occupies residues 671-914 (MTGATGFVGA…FVPVDYLVDA (244 aa)). A Thioester reductase (TE) domain is found at 672 to 915 (TGATGFVGAF…VPVDYLVDAI (244 aa)).

This sequence belongs to the NRP synthetase family. Pantetheine 4'-phosphate serves as cofactor.

The enzyme catalyses L-valine + ATP + NADPH + H(+) = L-valinal + AMP + diphosphate + NADP(+). It catalyses the reaction L-tryptophan + ATP + NADPH + H(+) = L-tryptophanal + AMP + diphosphate + NADP(+). It participates in alkaloid biosynthesis. Functionally, non-canonical nonribosomal peptide synthetase; part of the gene cluster that mediates the biosynthesis of campesine G, a dimeric indole piperazine alkaloid that shows good insecticidal activity Galleria mellonella. CpsA catalyzes the first steps of the pathway by producing L-tryptophanal and L-valinal from their respective amino-acids. These products condensate spontaneously to form trypyl-valyl pyrazine also known as didehydrocampesine A. The NmrA-like family domain-containing oxidoreductase cpsB is the next enzyme in cps pathway and reduces the unstable didehydrocampesine A to campesine A. The methyltransferase cpsF and the acetyltransferase cpsE both recognize N13 of piperazine ring to carry out methylation and acetylation of campesine A to produce campesine C and B, respectively. The cytochrome P450 monooxygenase cpsD then acts as a dimerase that catalyzes oxidative heterocoupling between campesine B and C to produce heterodimers with unexpected 6/5/6/6/6/6/5/6 eight-ring scaffold called campesine D. Finally,the cytochrome P450 monooxygenase cpsC is a regioselective dehydrogenase that catalyzes dehydrogenation reaction towards C2-N1 to produce campesine G. The polypeptide is Non-canonical nonribosomal peptide synthetase cpsA (Aspergillus campestris (strain IBT 28561)).